The sequence spans 307 residues: Ribonuclease HIII (307 aa).

The 215-residue stretch at 93–307 (MSVIGSDEVG…ANTQKAKKWL (215 aa)) folds into the RNase H type-2 domain. Positions 99, 100, and 204 each coordinate a divalent metal cation.

This sequence belongs to the RNase HII family. RnhC subfamily. The cofactor is Mn(2+). Requires Mg(2+) as cofactor.

The protein resides in the cytoplasm. It catalyses the reaction Endonucleolytic cleavage to 5'-phosphomonoester.. Endonuclease that specifically degrades the RNA of RNA-DNA hybrids. In Bacillus pumilus (strain SAFR-032), this protein is Ribonuclease HIII.